The following is a 464-amino-acid chain: MGSVNSSPNEEFETVPDSQISGFDSPLIPTSVGSYFRDDDDDEKVHPNFISDPENDSLNSDEEFSSLENSDLNLSGAKAESGDDFDPILKRTIISKRKAPSNNEDEEIVKTPRKLVNYVPLKIFNLGDSFDDTITTTVAKLQDLKKEILDSPRSNKSIVITSNTVAKSELQKSIKFSGSIPEIYLDVVTKETISDKYKDWHFISKNCHYEQLMDLEMKDTAYSFLFGSSRSQGKVPEFVHLKCPSITNLLVLFGVNQEKCNSLKINYEKKENSRYDNLCTIFPVNKMLKFLMYFYSDDDNDDVREFFLKAFICLILDRKVFNAMESDHRLCFKVLELFNEAHFINSYFEIVDKNDFFLHYRLLQIFPHLQSALLRRRFSEKQGRTETIQQNIIKEFNEFFDCKNYKNLLYFILTMYGSKFIPFGPKCQVTEYFKDCILDISNETTNDVEISILKGILNLFSKIR.

The tract at residues 1-69 is disordered; that stretch reads MGSVNSSPNE…SDEEFSSLEN (69 aa). Residues 53 to 65 are compositionally biased toward acidic residues; it reads PENDSLNSDEEFS. Residues S81 and S101 each carry the phosphoserine modification.

In terms of assembly, component of the Smc5-Smc6 complex which consists of KRE29, MMS21, NSE1, NSE3, NSE4, NSE5, SMC5 and SMC6. Interacts with NSE5.

It is found in the nucleus. The protein localises to the cytoplasm. In terms of biological role, acts in a DNA repair pathway for removal of UV-induced DNA damage that is distinct from classical nucleotide excision repair and in repair of ionizing radiation damage. Functions in homologous recombination repair of DNA double strand breaks and in recovery of stalled replication forks. The sequence is that of DNA repair protein KRE29 (KRE29) from Saccharomyces cerevisiae (strain ATCC 204508 / S288c) (Baker's yeast).